A 391-amino-acid chain; its full sequence is ATP phosphoribosyltransferase regulatory subunit (391 aa).

Belongs to the class-II aminoacyl-tRNA synthetase family. HisZ subfamily. In terms of assembly, heteromultimer composed of HisG and HisZ subunits.

The protein localises to the cytoplasm. It participates in amino-acid biosynthesis; L-histidine biosynthesis; L-histidine from 5-phospho-alpha-D-ribose 1-diphosphate: step 1/9. Its function is as follows. Required for the first step of histidine biosynthesis. May allow the feedback regulation of ATP phosphoribosyltransferase activity by histidine. This Bacillus licheniformis (strain ATCC 14580 / DSM 13 / JCM 2505 / CCUG 7422 / NBRC 12200 / NCIMB 9375 / NCTC 10341 / NRRL NRS-1264 / Gibson 46) protein is ATP phosphoribosyltransferase regulatory subunit.